We begin with the raw amino-acid sequence, 335 residues long: Tetraacyldisaccharide 4'-kinase (335 aa).

ATP is bound at residue 59 to 66 (TAGGNGKT).

This sequence belongs to the LpxK family.

The catalysed reaction is a lipid A disaccharide + ATP = a lipid IVA + ADP + H(+). Its pathway is glycolipid biosynthesis; lipid IV(A) biosynthesis; lipid IV(A) from (3R)-3-hydroxytetradecanoyl-[acyl-carrier-protein] and UDP-N-acetyl-alpha-D-glucosamine: step 6/6. In terms of biological role, transfers the gamma-phosphate of ATP to the 4'-position of a tetraacyldisaccharide 1-phosphate intermediate (termed DS-1-P) to form tetraacyldisaccharide 1,4'-bis-phosphate (lipid IVA). This is Tetraacyldisaccharide 4'-kinase from Vibrio vulnificus (strain YJ016).